A 270-amino-acid chain; its full sequence is MKMTSKKMKDELMKKLSRPEWDFHYDSEKEVLRIEQKDSKKGINVSLPGVVAKWEVNKEKAIEEVAYYVQEALIAMHKEENSAAKILPVIRSTSFPKQAEEGNPFIMTDHTAETRIYYALDSNKTYRLIDERLLQKLGLTEKQVREMALFNARSLGYEFKQDTVAGNTFYFLNTNDGYDATRILNESLLQSMREKISGDMVVAVPHQDVLIIADIVNEIGYDIIAQMTMKFFAEGHVPITSLSFVYEDGDFEPIFILAKNRKKTDGKEKG.

It belongs to the UPF0354 family.

This is UPF0354 protein BA_4944/GBAA_4944/BAS4588 from Bacillus anthracis.